A 364-amino-acid polypeptide reads, in one-letter code: Tyrosine-protein phosphatase YVH1 (364 aa).

A Tyrosine-protein phosphatase domain is found at 11–173; the sequence is EVTRILGGIY…LHLFEKMGGD (163 aa). Cys-117 serves as the catalytic Phosphocysteine intermediate. Ser-196 carries the post-translational modification Phosphoserine.

Belongs to the protein-tyrosine phosphatase family. Non-receptor class dual specificity subfamily.

It catalyses the reaction O-phospho-L-tyrosyl-[protein] + H2O = L-tyrosyl-[protein] + phosphate. Its function is as follows. May be directly involved in signal transduction and/or cell cycle regulation. It is necessary for maintaining growth rate or spore germination. Could show both activity toward tyrosine-protein phosphate as well as with serine-protein phosphate. The sequence is that of Tyrosine-protein phosphatase YVH1 (YVH1) from Saccharomyces cerevisiae (strain ATCC 204508 / S288c) (Baker's yeast).